The sequence spans 275 residues: Catechol 1,2-dioxygenase 2 (275 aa).

Positions 158, 192, 216, and 218 each coordinate Fe cation.

It belongs to the intradiol ring-cleavage dioxygenase family. In terms of assembly, homodimer. Fe(3+) is required as a cofactor.

The enzyme catalyses catechol + O2 = cis,cis-muconate + 2 H(+). It functions in the pathway aromatic compound metabolism; beta-ketoadipate pathway; 5-oxo-4,5-dihydro-2-furylacetate from catechol: step 1/3. Functionally, can cleave 4-methyl-, 4-chloro-, and 3-methoxycatechol at lower rates than catechol, but has no activity with 4-nitrocatechol or protocatechuic acid. In Acinetobacter lwoffii, this protein is Catechol 1,2-dioxygenase 2 (catA2).